The primary structure comprises 104 residues: Protein S100-A14 (104 aa).

The 35-residue stretch at 27–61 (KNFHQYSVEGGKETLTPSELRDLVTQQLPHLMPSN) folds into the EF-hand domain.

It belongs to the S-100 family. Homodimer. Interacts with AGER.

It is found in the cytoplasm. Modulates P53/TP53 protein levels, and thereby plays a role in the regulation of cell survival and apoptosis. Depending on the context, it can promote cell proliferation or apoptosis. Plays a role in the regulation of cell migration by modulating the levels of MMP2, a matrix protease that is under transcriptional control of P53/TP53. Does not bind calcium. The polypeptide is Protein S100-A14 (S100A14) (Bos taurus (Bovine)).